A 63-amino-acid chain; its full sequence is Cysteine-rich peptide clone 2 (63 aa).

A signal peptide spans 1–23; the sequence is MHFSGVVLILLSMTLVNFVFVET. 3 disulfide bridges follow: Cys33–Cys53, Cys38–Cys58, and Cys42–Cys60.

As to expression, expressed by the venom gland.

The protein localises to the secreted. This Tityus costatus (Brazilian scorpion) protein is Cysteine-rich peptide clone 2.